A 352-amino-acid polypeptide reads, in one-letter code: Glucose 1-dehydrogenase 1 (352 aa).

Residue cysteine 35 coordinates Zn(2+). Threonine 37 is a binding site for substrate. Histidine 60 and glutamate 61 together coordinate Zn(2+). Residue asparagine 83 coordinates substrate. 4 residues coordinate Zn(2+): cysteine 87, cysteine 90, cysteine 93, and cysteine 101. The substrate site is built by glutamate 108, glutamine 144, and aspartate 148. A Zn(2+)-binding site is contributed by glutamine 144. NADP(+)-binding positions include 182-185 (TGTI), 204-206 (NKR), 264-266 (FGF), 292-294 (LIN), and lysine 341. Asparagine 294 provides a ligand contact to substrate.

The protein belongs to the zinc-containing alcohol dehydrogenase family. Glucose 1-dehydrogenase subfamily. It depends on Zn(2+) as a cofactor.

It catalyses the reaction D-glucose + NAD(+) = D-glucono-1,5-lactone + NADH + H(+). The enzyme catalyses D-glucose + NADP(+) = D-glucono-1,5-lactone + NADPH + H(+). Its function is as follows. Catalyzes the NAD(P)(+)-dependent oxidation of D-glucose to D-gluconate via gluconolactone. Can utilize both NAD(+) and NADP(+) as electron acceptor. Is involved in the degradation of glucose through a non-phosphorylative variant of the Entner-Doudoroff pathway. The chain is Glucose 1-dehydrogenase 1 from Picrophilus torridus (strain ATCC 700027 / DSM 9790 / JCM 10055 / NBRC 100828 / KAW 2/3).